Reading from the N-terminus, the 91-residue chain is uncharacterized protein (91 aa).

A run of 3 helical transmembrane segments spans residues 9–29 (LIHA…YTAG), 30–50 (LGIF…VIFG), and 67–87 (WLGC…VLKF).

It is found in the cell membrane. This is an uncharacterized protein from Methanocaldococcus jannaschii (strain ATCC 43067 / DSM 2661 / JAL-1 / JCM 10045 / NBRC 100440) (Methanococcus jannaschii).